The chain runs to 206 residues: Alpha-1-acid glycoprotein 3 (206 aa).

The N-terminal stretch at 1–18 (MELHTVLIMLSLLPLLEA) is a signal peptide. Residues Asn-33, Asn-75, and Asn-103 are each glycosylated (N-linked (GlcNAc...) asparagine). Cys-90 and Cys-183 are joined by a disulfide. Positions 187-206 (EKKHLELEKETKKDPEESQA) are disordered.

This sequence belongs to the calycin superfamily. Lipocalin family.

The protein resides in the secreted. Functionally, functions as a transport protein in the blood stream. Binds various ligands in the interior of its beta-barrel domain. Appears to function in modulating the activity of the immune system during the acute-phase reaction. The chain is Alpha-1-acid glycoprotein 3 (Orm3) from Mus musculus (Mouse).